A 359-amino-acid chain; its full sequence is UDP-3-O-acylglucosamine N-acyltransferase (359 aa).

Residue His247 is the Proton acceptor of the active site.

This sequence belongs to the transferase hexapeptide repeat family. LpxD subfamily. Homotrimer.

It carries out the reaction a UDP-3-O-[(3R)-3-hydroxyacyl]-alpha-D-glucosamine + a (3R)-hydroxyacyl-[ACP] = a UDP-2-N,3-O-bis[(3R)-3-hydroxyacyl]-alpha-D-glucosamine + holo-[ACP] + H(+). It participates in bacterial outer membrane biogenesis; LPS lipid A biosynthesis. Catalyzes the N-acylation of UDP-3-O-acylglucosamine using 3-hydroxyacyl-ACP as the acyl donor. Is involved in the biosynthesis of lipid A, a phosphorylated glycolipid that anchors the lipopolysaccharide to the outer membrane of the cell. This chain is UDP-3-O-acylglucosamine N-acyltransferase, found in Chlorobium chlorochromatii (strain CaD3).